The primary structure comprises 57 residues: Large ribosomal subunit protein uL30 (57 aa).

It belongs to the universal ribosomal protein uL30 family. Part of the 50S ribosomal subunit.

The polypeptide is Large ribosomal subunit protein uL30 (Clostridium perfringens (strain ATCC 13124 / DSM 756 / JCM 1290 / NCIMB 6125 / NCTC 8237 / Type A)).